The chain runs to 890 residues: Translation initiation factor IF-2 (890 aa).

Disordered stretches follow at residues 31-164 and 189-266; these read KLAQ…PAEP and FKAP…ESLK. Over residues 42–54 the composition is skewed to basic and acidic residues; sequence SSSEKPSAKEKSV. The span at 55 to 72 shows a compositional bias: low complexity; that stretch reads KVALAATSTPTASAEQAS. Residues 114–128 are compositionally biased toward acidic residues; the sequence is PEPELEVVDEVCDES. Composition is skewed to basic and acidic residues over residues 149–163 and 242–266; these read PQEK…KPAE and PKRD…ESLK. The tr-type G domain maps to 395 to 564; sequence IRSPIVAFMG…ALQAEVLELK (170 aa). The tract at residues 404 to 411 is G1; that stretch reads GHVDHGKT. GTP is bound at residue 404 to 411; that stretch reads GHVDHGKT. Residues 429–433 are G2; it reads AITQH. A G3 region spans residues 450–453; it reads DTPG. GTP contacts are provided by residues 450–454 and 504–507; these read DTPGH and NKCD. The G4 stretch occupies residues 504-507; that stretch reads NKCD. Residues 540-542 are G5; it reads SAK.

It belongs to the TRAFAC class translation factor GTPase superfamily. Classic translation factor GTPase family. IF-2 subfamily.

Its subcellular location is the cytoplasm. In terms of biological role, one of the essential components for the initiation of protein synthesis. Protects formylmethionyl-tRNA from spontaneous hydrolysis and promotes its binding to the 30S ribosomal subunits. Also involved in the hydrolysis of GTP during the formation of the 70S ribosomal complex. The sequence is that of Translation initiation factor IF-2 (infB) from Chlamydia pneumoniae (Chlamydophila pneumoniae).